The following is a 218-amino-acid chain: Octanoyltransferase (218 aa).

The region spanning 30–213 is the BPL/LPL catalytic domain; it reads GEIEDTLILV…YFSEVFNYDI (184 aa). Substrate-binding positions include 75–82, 143–145, and 156–158; these read RGGDVTYH, AIG, and GFA. The active-site Acyl-thioester intermediate is cysteine 174.

Belongs to the LipB family.

It localises to the cytoplasm. The catalysed reaction is octanoyl-[ACP] + L-lysyl-[protein] = N(6)-octanoyl-L-lysyl-[protein] + holo-[ACP] + H(+). It participates in protein modification; protein lipoylation via endogenous pathway; protein N(6)-(lipoyl)lysine from octanoyl-[acyl-carrier-protein]: step 1/2. In terms of biological role, catalyzes the transfer of endogenously produced octanoic acid from octanoyl-acyl-carrier-protein onto the lipoyl domains of lipoate-dependent enzymes. Lipoyl-ACP can also act as a substrate although octanoyl-ACP is likely to be the physiological substrate. This chain is Octanoyltransferase, found in Alkaliphilus metalliredigens (strain QYMF).